The sequence spans 430 residues: Methylthioribose kinase 1 (430 aa).

ATP contacts are provided by residues 52–56 (DGNLN), Lys-71, and 125–127 (RYI). Residue Asn-56 coordinates substrate. Asp-246 is a substrate binding site. An ATP-binding site is contributed by 263 to 265 (DPE). Residue Arg-373 coordinates substrate.

This sequence belongs to the methylthioribose kinase family. As to quaternary structure, homodimer.

The catalysed reaction is 5-(methylsulfanyl)-D-ribose + ATP = 5-(methylsulfanyl)-alpha-D-ribose 1-phosphate + ADP + H(+). It functions in the pathway amino-acid biosynthesis; L-methionine biosynthesis via salvage pathway; S-methyl-5-thio-alpha-D-ribose 1-phosphate from S-methyl-5'-thioadenosine (hydrolase route): step 2/2. Functionally, catalyzes the phosphorylation of methylthioribose into methylthioribose-1-phosphate. This is Methylthioribose kinase 1 from Oryza sativa subsp. japonica (Rice).